The following is a 128-amino-acid chain: Large ribosomal subunit protein bL17 (128 aa).

Belongs to the bacterial ribosomal protein bL17 family. In terms of assembly, part of the 50S ribosomal subunit. Contacts protein L32.

This chain is Large ribosomal subunit protein bL17, found in Proteus mirabilis (strain HI4320).